A 400-amino-acid polypeptide reads, in one-letter code: Argininosuccinate synthase (400 aa).

ATP contacts are provided by residues 10–18 and Ala-38; that span reads AYSGGVDTS. Position 89 (Tyr-89) interacts with L-citrulline. Gly-119 is a binding site for ATP. L-aspartate-binding residues include Thr-121, Asn-125, and Asp-126. Residue Asn-125 coordinates L-citrulline. Positions 129, 177, 186, 262, and 274 each coordinate L-citrulline.

The protein belongs to the argininosuccinate synthase family. Type 1 subfamily. As to quaternary structure, homotetramer.

The protein localises to the cytoplasm. It carries out the reaction L-citrulline + L-aspartate + ATP = 2-(N(omega)-L-arginino)succinate + AMP + diphosphate + H(+). It functions in the pathway amino-acid biosynthesis; L-arginine biosynthesis; L-arginine from L-ornithine and carbamoyl phosphate: step 2/3. The protein is Argininosuccinate synthase of Synechococcus elongatus (strain ATCC 33912 / PCC 7942 / FACHB-805) (Anacystis nidulans R2).